The chain runs to 355 residues: 1D-myo-inositol 2-acetamido-2-deoxy-alpha-D-glucopyranoside deacetylase 3 (355 aa).

Histidine 31, aspartate 34, and histidine 169 together coordinate Zn(2+).

It belongs to the MshB deacetylase family. The cofactor is Zn(2+).

The enzyme catalyses 1D-myo-inositol 2-acetamido-2-deoxy-alpha-D-glucopyranoside + H2O = 1D-myo-inositol 2-amino-2-deoxy-alpha-D-glucopyranoside + acetate. Functionally, catalyzes the deacetylation of 1D-myo-inositol 2-acetamido-2-deoxy-alpha-D-glucopyranoside (GlcNAc-Ins) in the mycothiol biosynthesis pathway. This chain is 1D-myo-inositol 2-acetamido-2-deoxy-alpha-D-glucopyranoside deacetylase 3, found in Catenulispora acidiphila (strain DSM 44928 / JCM 14897 / NBRC 102108 / NRRL B-24433 / ID139908).